The chain runs to 191 residues: Orotate phosphoribosyltransferase (191 aa).

116-124 (EDVVTTGGS) contacts 5-phospho-alpha-D-ribose 1-diphosphate. Orotate-binding residues include Thr-120 and Arg-148.

Belongs to the purine/pyrimidine phosphoribosyltransferase family. PyrE subfamily. Homodimer. Requires Mg(2+) as cofactor.

It carries out the reaction orotidine 5'-phosphate + diphosphate = orotate + 5-phospho-alpha-D-ribose 1-diphosphate. It participates in pyrimidine metabolism; UMP biosynthesis via de novo pathway; UMP from orotate: step 1/2. Catalyzes the transfer of a ribosyl phosphate group from 5-phosphoribose 1-diphosphate to orotate, leading to the formation of orotidine monophosphate (OMP). This chain is Orotate phosphoribosyltransferase, found in Carboxydothermus hydrogenoformans (strain ATCC BAA-161 / DSM 6008 / Z-2901).